Reading from the N-terminus, the 173-residue chain is Alpha-crystallin A chain (173 aa).

M1 is subject to N-acetylmethionine. Residues 1–63 form a required for complex formation with BFSP1 and BFSP2 region; it reads MDIAIQHPWF…RSVLDSGVSE (63 aa). Residue Q6 is modified to Deamidated glutamine; partial. S45 carries the post-translational modification Phosphoserine. A Deamidated glutamine; partial modification is found at Q50. The 111-residue stretch at 52–162 folds into the sHSP domain; the sequence is LFRSVLDSGV…GHSERAIPVS (111 aa). At K70 the chain carries N6-acetyllysine. Q90 bears the Deamidated glutamine; partial mark. At K99 the chain carries N6-acetyllysine. H100 contacts Zn(2+). Residue N101 is modified to Deamidated asparagine; partial. Zn(2+) is bound by residues E102 and H107. S122 carries the post-translational modification Phosphoserine. Deamidated asparagine; partial is present on N123. The interval 144-173 is disordered; it reads PKIPSGMDAGHSERAIPVSREEKPSSAPSS. The segment covering 153–167 has biased composition (basic and acidic residues); the sequence is GHSERAIPVSREEKP. A Zn(2+)-binding site is contributed by H154. Residue S162 is glycosylated (O-linked (GlcNAc) serine).

Belongs to the small heat shock protein (HSP20) family. Heteromer composed of three CRYAA and one CRYAB subunits. Inter-subunit bridging via zinc ions enhances stability, which is crucial as there is no protein turn over in the lens. Can also form homodimers and homotetramers (dimers of dimers) which serve as the building blocks of homooligomers. Within homooligomers, the zinc-binding motif is created from residues of 3 different molecules. His-100 and Glu-102 from one molecule are ligands of the zinc ion, and His-107 and His-154 residues from additional molecules complete the site with tetrahedral coordination geometry. Part of a complex required for lens intermediate filament formation composed of BFSP1, BFSP2 and CRYAA. In terms of processing, acetylation at Lys-70 may increase chaperone activity. Undergoes age-dependent proteolytical cleavage at the C-terminus.

Its subcellular location is the cytoplasm. It localises to the nucleus. Its function is as follows. Contributes to the transparency and refractive index of the lens. Acts as a chaperone, preventing aggregation of various proteins under a wide range of stress conditions. Required for the correct formation of lens intermediate filaments as part of a complex composed of BFSP1, BFSP2 and CRYAA. The polypeptide is Alpha-crystallin A chain (CRYAA) (Ceratotherium simum (White rhinoceros)).